The sequence spans 210 residues: Small ribosomal subunit protein uS7 (210 aa).

Residues 1 to 22 (MSDEQPAEDETEEAAAESEDTQ) show a composition bias toward acidic residues. The tract at residues 1-23 (MSDEQPAEDETEEAAAESEDTQE) is disordered.

This sequence belongs to the universal ribosomal protein uS7 family. As to quaternary structure, part of the 30S ribosomal subunit. Contacts proteins S9 and S11.

Its function is as follows. One of the primary rRNA binding proteins, it binds directly to 16S rRNA where it nucleates assembly of the head domain of the 30S subunit. Is located at the subunit interface close to the decoding center. The chain is Small ribosomal subunit protein uS7 from Halobacterium salinarum (strain ATCC 29341 / DSM 671 / R1).